Here is a 37-residue protein sequence, read N- to C-terminus: Large ribosomal subunit protein bL36 (37 aa).

This sequence belongs to the bacterial ribosomal protein bL36 family.

This is Large ribosomal subunit protein bL36 from Beutenbergia cavernae (strain ATCC BAA-8 / DSM 12333 / CCUG 43141 / JCM 11478 / NBRC 16432 / NCIMB 13614 / HKI 0122).